The sequence spans 267 residues: Probable membrane transporter protein MJ0441 (267 aa).

The next 7 membrane-spanning stretches (helical) occupy residues 10–30 (LLLL…GSLF), 31–51 (GIGG…YFGI), 55–75 (VKFA…ISIF), 87–107 (ASIT…FLVV), 158–178 (FLSG…LAMA), 185–205 (AVAI…ISYL), and 213–233 (IYNI…PIIY).

Belongs to the 4-toluene sulfonate uptake permease (TSUP) (TC 2.A.102) family.

The protein localises to the cell membrane. The sequence is that of Probable membrane transporter protein MJ0441 from Methanocaldococcus jannaschii (strain ATCC 43067 / DSM 2661 / JAL-1 / JCM 10045 / NBRC 100440) (Methanococcus jannaschii).